The primary structure comprises 491 residues: Aspartyl/glutamyl-tRNA(Asn/Gln) amidotransferase subunit B (491 aa).

This sequence belongs to the GatB/GatE family. GatB subfamily. As to quaternary structure, heterotrimer of A, B and C subunits.

It catalyses the reaction L-glutamyl-tRNA(Gln) + L-glutamine + ATP + H2O = L-glutaminyl-tRNA(Gln) + L-glutamate + ADP + phosphate + H(+). The enzyme catalyses L-aspartyl-tRNA(Asn) + L-glutamine + ATP + H2O = L-asparaginyl-tRNA(Asn) + L-glutamate + ADP + phosphate + 2 H(+). Its function is as follows. Allows the formation of correctly charged Asn-tRNA(Asn) or Gln-tRNA(Gln) through the transamidation of misacylated Asp-tRNA(Asn) or Glu-tRNA(Gln) in organisms which lack either or both of asparaginyl-tRNA or glutaminyl-tRNA synthetases. The reaction takes place in the presence of glutamine and ATP through an activated phospho-Asp-tRNA(Asn) or phospho-Glu-tRNA(Gln). The polypeptide is Aspartyl/glutamyl-tRNA(Asn/Gln) amidotransferase subunit B (Burkholderia multivorans (strain ATCC 17616 / 249)).